A 291-amino-acid chain; its full sequence is uncharacterized protein (291 aa).

Helical transmembrane passes span 13-33, 40-60, 81-101, 128-148, 158-178, and 220-240; these read FDLFFAAIACICGILKVMEMG, LGTVSKNGMAVLAVLVALGFL, GFLNPCVILSVIEFFMMLICI, FGLFGAIFMPYIFAECIRLLL, VILGILVLGCLAMAGLAYLEY, and GNVWMYLAMFASFTLVLILLA. An N-linked (GlcNAc...) asparagine glycan is attached at Asn249. A disordered region spans residues 269–291; sequence MASEDPPKDPLPRQEGGGGDTIA.

Its subcellular location is the membrane. This is an uncharacterized protein from Encephalitozoon cuniculi (strain GB-M1) (Microsporidian parasite).